A 767-amino-acid polypeptide reads, in one-letter code: MAKTLGDHLLNTLEELLPYDFEKFKFKLQNTSLEKGHSKIPRGHMQMARPVKLASLLITYYGEEYAVRLTLQILRATNQRQLAEELRKATGTEHLIEENRVGGSVQSSVENKAKSVKVPDVPEGDGTQQNNDESDTLPSSQAEVGKGPQKKSLTKRKDQRGPESLDSQTKPWTRSTAPLYRRTQGTQSPGDKESTASAQLRRNVSSAGRLQGLYNNAPGRRESKKAEVYVYLPSGKKRPRSLEITTYSREGEPPNSEVLPTQEETRNGSLIRMRTATLNGRTTGALEKGTGIPEHSMVLDEKTFRNMSSKTSLIGEERCPTSWTENGNGSPETTESSGETAGSILSDPEVPLSLCEKPAKTPEDPASLGQAACEGRSQDKAVCPLCHTQEGDLRGDTCVQSSCSCSIAPGDPKASGRCSICFQCQGLLARKSCEAQSPQSLPQCPRHMKQVLLLFCEDHREPICLICRLSLEHQGHRVRPIEEAALEYKEQIREQLERLREMRGYVEEHRLQGDKKTDDFLKQTEIQKQKISCPLEKLYQLLEKQEQLFVTWLQELSQTISKVRETYYTRVSLLDEMIEELEAKQDQPEWDLMQDIGITLHRAKMMSASELLDTPPGVKEKLHLLYQKSKSVEKNMQCFSEMLSSEMAFSASDVAKWEGRQPSATQVQGLVPTVHLKCDGAHTQDCDVVFYPEREAGGSEPKDYLHPQPAQDTPELHEIHSRNNKRKFKSFLKWKPSFSRTDWRLRTCCYRDLDQAAAHPNLIFSMI.

One can recognise a Pyrin domain in the interval M1–T92. Positions H94–G219 are disordered. Composition is skewed to polar residues over residues G126–A142, L165–T176, and T183–G208. Residue S241 is modified to Phosphoserine. The interval T311–S346 is disordered. The segment covering T321–T340 has biased composition (polar residues). The B box-type zinc finger occupies Q439–I481. Zn(2+)-binding residues include C444, H447, C467, and H473. The stretch at I481–R510 forms a coiled coil. Residues K489–M647 form a required for homotrimerization and induction of pyroptosomes region. Residues G697–I719 are disordered.

In terms of assembly, homotrimer. Interacts (via the B box-type zinc finger) with PSTPIP1. Interacts (via the B30.2/SPRY domain) with several components of the inflammasome complex, including CASP1 p20 and p10 subunits, CASP5, PYCARD, NLRP1, NLRP2 and NLRP3, as well as with unprocessed IL1B; this interaction may lead to autophagic degradation of these proteins. Component of the AIM2 PANoptosome complex, a multiprotein complex that drives inflammatory cell death (PANoptosis). Interacts with NFKBIA and RELA. Interacts weakly with VASP and ACTR3. Interacts with active ULK1 (phosphorylated on 'Ser-317') and BECN1 simultaneously. Also interacts with ATG16L1 (via WD repeats), and with ATG8 family members, including GABARAP, GABARAPL1 and, to a lesser extent, GABARAPL2, MAP1LC3A/LC3A and MAP1LC3C/LC3C. Interacts with TRIM21. Interacts with YWHAB, YWHAE, YWHAG, YWHAH, YWHAQ and YWHAZ; the interaction is required for the down-regulation of pyrin pro-inflammatory activity. Phosphorylation at Ser-241 is required for the interaction with 14-3-3 proteins and down-regulation of pyrin pro-inflammatory activity. In terms of processing, degraded along with the delivery of its substrates to autolysosomal compartments (at protein level). In terms of tissue distribution, expressed in spleen peripheral blood granulocytes. Not expressed in lymphocytes, thymus, testis, ovary, heart, brain, lung, liver, kidney and muscle.

The protein localises to the cytoplasm. Its subcellular location is the cytoskeleton. It is found in the cell projection. The protein resides in the ruffle. It localises to the lamellipodium. The protein localises to the cytoplasmic vesicle. Its subcellular location is the autophagosome. It is found in the nucleus. Its function is as follows. Involved in the regulation of innate immunity and the inflammatory response in response to IFNG/IFN-gamma. Organizes autophagic machinery by serving as a platform for the assembly of ULK1, Beclin 1/BECN1, ATG16L1, and ATG8 family members and recognizes specific autophagy targets, thus coordinating target recognition with assembly of the autophagic apparatus and initiation of autophagy. Acts as an autophagy receptor for the degradation of several inflammasome components, including CASP1, NLRP1 and NLRP3, hence preventing excessive IL1B- and IL18-mediated inflammation. However, it can also have a positive effect in the inflammatory pathway, acting as an innate immune sensor that triggers PYCARD/ASC specks formation, caspase-1 activation, and IL1B and IL18 production. Together with AIM2, also acts as a mediator of pyroptosis, necroptosis and apoptosis (PANoptosis), an integral part of host defense against pathogens, in response to bacterial infection. It is required for PSTPIP1-induced PYCARD/ASC oligomerization and inflammasome formation. Recruits PSTPIP1 to inflammasomes, and is required for PSTPIP1 oligomerization. The polypeptide is Pyrin (Mus musculus (Mouse)).